A 227-amino-acid polypeptide reads, in one-letter code: Ribose-5-phosphate isomerase A (227 aa).

Substrate is bound by residues 28–31 (TGST), 85–88 (DGAD), and 98–101 (KGGG). Glu-107 acts as the Proton acceptor in catalysis. Lys-125 provides a ligand contact to substrate.

Belongs to the ribose 5-phosphate isomerase family. In terms of assembly, homodimer.

It catalyses the reaction aldehydo-D-ribose 5-phosphate = D-ribulose 5-phosphate. It functions in the pathway carbohydrate degradation; pentose phosphate pathway; D-ribose 5-phosphate from D-ribulose 5-phosphate (non-oxidative stage): step 1/1. Its function is as follows. Catalyzes the reversible conversion of ribose-5-phosphate to ribulose 5-phosphate. The protein is Ribose-5-phosphate isomerase A of Limosilactobacillus reuteri (strain DSM 20016) (Lactobacillus reuteri).